The sequence spans 261 residues: MFELIYPGWLAGILLSFATGPLGSFIIWRRISSFGDTLSHSSILGLAISILFQIDSFYTELFFMSFLAIILVWMEQLLSVSLETILSIISHSSLSLGIICISLMSTSHHIDLSNYLFGDLLLVTVFDLCIIALGSLIVLTILFFRWNSILLLTVNEELAQIDGVNIFYARLTLMLTTAICISIAIKFVGVLLITSLLIIPPATAQIFSNSPEKTIGFSILISIISVTGGIFLSFFYNVPTSPSIVLFSSCVYLLSNIKKLI.

A run of 7 helical transmembrane segments spans residues 8 to 28 (GWLAGILLSFATGPLGSFIIW), 54 to 74 (IDSFYTELFFMSFLAIILVWM), 84 to 104 (TILSIISHSSLSLGIICISLM), 129 to 149 (CIIALGSLIVLTILFFRWNSI), 179 to 199 (ICISIAIKFVGVLLITSLLII), 215 to 235 (IGFSILISIISVTGGIFLSFF), and 238 to 254 (VPTSPSIVLFSSCVYLL).

Belongs to the ABC-3 integral membrane protein family.

It localises to the cell membrane. Involved in the high-affinity zinc uptake transport system. The chain is High-affinity zinc uptake system membrane protein ZnuB (znuB) from Buchnera aphidicola subsp. Schizaphis graminum (strain Sg).